Reading from the N-terminus, the 117-residue chain is Immunoglobulin heavy variable 3-5 (117 aa).

Residues 1-18 form the signal peptide; sequence MKMFTLLYLLTVVPGILS. Positions 19–117 constitute an Ig-like domain; sequence DVQLQESGPG…EDTATYYCAR (99 aa). Cysteines 40 and 115 form a disulfide.

The polypeptide is Immunoglobulin heavy variable 3-5 (Mus musculus (Mouse)).